The sequence spans 172 residues: Small ribosomal subunit protein uS13 (172 aa).

Residues 131–172 form a disordered region; the sequence is GQRTRTTGRTGVTVGVRRSKAAQAAQQQQKAQASSGGEKKQG. The span at 134 to 163 shows a compositional bias: low complexity; that stretch reads TRTTGRTGVTVGVRRSKAAQAAQQQQKAQA.

Belongs to the universal ribosomal protein uS13 family. In terms of assembly, part of the 30S ribosomal subunit. Forms a loose heterodimer with protein S19. Forms two bridges to the 50S subunit in the 70S ribosome.

Its function is as follows. Located at the top of the head of the 30S subunit, it contacts several helices of the 16S rRNA. In the 70S ribosome it contacts the 23S rRNA (bridge B1a) and protein L5 of the 50S subunit (bridge B1b), connecting the 2 subunits; these bridges are implicated in subunit movement. The polypeptide is Small ribosomal subunit protein uS13 (Sulfurisphaera tokodaii (strain DSM 16993 / JCM 10545 / NBRC 100140 / 7) (Sulfolobus tokodaii)).